The primary structure comprises 506 residues: Cationic amino acid transporter 8 (506 aa).

N-linked (GlcNAc...) asparagine glycosylation is found at N2 and N5. The helical transmembrane segment at 38–58 (FYLLLIIIIYTATSACIYFDW) threads the bilayer. N75 carries an N-linked (GlcNAc...) asparagine glycan. 5 helical membrane-spanning segments follow: residues 93 to 113 (NLYP…GFLY), 116 to 136 (IGPK…WIFL), 147 to 167 (LIGF…ILTV), 174 to 194 (ISTF…AVPA), and 211 to 231 (ICYG…TFLL). N277 carries an N-linked (GlcNAc...) asparagine glycan. Residues 302 to 322 (ILLFFKVLLSYPSICIIVYFI) traverse the membrane as a helical segment. 2 N-linked (GlcNAc...) asparagine glycosylation sites follow: N325 and N342. A run of 4 helical transmembrane segments spans residues 344-364 (SIIN…IIFG), 372-392 (AAII…TALI), 399-419 (LISA…IYCF), and 427-447 (VVFG…SLFC). N-linked (GlcNAc...) asparagine glycosylation is found at N453 and N456. A helical membrane pass occupies residues 466–486 (TISILLAISFIIMFLPLSILY).

The protein belongs to the SLC43A transporter (TC 2.A.1.44) family.

It is found in the cell membrane. Cationic amino acid transporter which transports L-arginine, L-lysine and, to a lesser extent, L-histidine and ornithine. Plays an essential role in gametogenesis. The chain is Cationic amino acid transporter 8 from Plasmodium berghei (strain Anka).